The primary structure comprises 295 residues: MDNSGKEAEAMALLAEAERKVKNSQSFFSGLFGGSSKIEEACEIYARAANMFKMAKNWSAAGNAFCQAAQLHLQLQSKHDAATCFVDAGNAFKKADPQEAINCLMRAIEIYTDMGRFTIAAKHHISIAEIYETELVDIEKAIAHYEQSADYYKGEESNSSANKCLLKVAGYAALLEQYQKAIDIYEQVGTNAMDSPLLKYSAKDYFFKAALCHFCIDMLNAKLAVQKYEELFPAFSDSRECKLMKKLLEAHEEQNVDSYTESVKEYDSISRLDQWLTTMLLRIKKTIQGDEEDLR.

Methionine 1 carries the post-translational modification N-acetylmethionine. 3 positions are modified to phosphoserine: serine 26, serine 29, and serine 195.

This sequence belongs to the SNAP family. Interacts with PRKCABP, and disrupts the interaction between GRIA2 and PRKCABP, leading to the internalization of GRIA2. Found in a complex with VAMP8. Component of a SNARE-like complex that contains at least ZW10, USE1L, RINT1, STX18 and NAPA/SNAP-alpha. Interacts with VTI1A. Interacts with STX12. Interacts with GNA12 (via N-terminus); the interaction promotes CDH5 localization to plasma membrane.

The protein localises to the cell membrane. Functionally, required for vesicular transport between the endoplasmic reticulum and the Golgi apparatus. Together with GNA12 promotes CDH5 localization to plasma membrane. This chain is Alpha-soluble NSF attachment protein (NAPA), found in Homo sapiens (Human).